Consider the following 167-residue polypeptide: uncharacterized protein (167 aa).

Positions 1–13 (MQGDIRRKKDLLP) are enriched in basic and acidic residues. Disordered regions lie at residues 1–26 (MQGDIRRKKDLLPRYKTGSKYNSRRR) and 67–167 (ESHS…ILDN). Over residues 71–80 (SDVSASASDH) the composition is skewed to low complexity. Over residues 102–156 (VPKEKFNNEVAKQQEVKNLENDLKPQIDSEKQKQINKDKKEQKQQLQKEKQDLAK) the composition is skewed to basic and acidic residues.

This is an uncharacterized protein from Saccharomyces cerevisiae (strain ATCC 204508 / S288c) (Baker's yeast).